A 355-amino-acid polypeptide reads, in one-letter code: F-box only protein 32 (355 aa).

A Nuclear localization signal motif is present at residues 62–67 (KKRKKD). The Nuclear export signal motif lies at 169 to 173 (LLQTL). One can recognise an F-box domain in the interval 223–271 (LTFTDLPLCLQLNIMQRLSDGRDLVSLGQAAPDLHVLSEDRLLWKKLCQ). A Bipartite nuclear localization signal motif is present at residues 280–295 (RKRLILSDKGQLDWKK).

In terms of assembly, part of the SCF (SKP1-CUL1-F-box) E3 ubiquitin-protein ligase complex SCF(FBXO32) formed of CUL1, SKP1, RBX1 and FBXO32. Specifically expressed in cardiac and skeletal muscle.

The protein resides in the cytoplasm. The protein localises to the nucleus. The protein operates within protein modification; protein ubiquitination. Substrate recognition component of a SCF (SKP1-CUL1-F-box protein) E3 ubiquitin-protein ligase complex which mediates the ubiquitination and subsequent proteasomal degradation of target proteins. Probably recognizes and binds to phosphorylated target proteins during skeletal muscle atrophy. Recognizes TERF1. In Homo sapiens (Human), this protein is F-box only protein 32 (FBXO32).